Consider the following 404-residue polypeptide: Probable tRNA sulfurtransferase (404 aa).

In terms of domain architecture, THUMP spans 61–166 (EAVSERLKDV…SGYSYIMCDE (106 aa)). Residues 184–185 (LL), 209–210 (HF), Arg-266, Gly-288, and Gln-297 each bind ATP.

Belongs to the ThiI family.

It localises to the cytoplasm. It carries out the reaction [ThiI sulfur-carrier protein]-S-sulfanyl-L-cysteine + a uridine in tRNA + 2 reduced [2Fe-2S]-[ferredoxin] + ATP + H(+) = [ThiI sulfur-carrier protein]-L-cysteine + a 4-thiouridine in tRNA + 2 oxidized [2Fe-2S]-[ferredoxin] + AMP + diphosphate. It catalyses the reaction [ThiS sulfur-carrier protein]-C-terminal Gly-Gly-AMP + S-sulfanyl-L-cysteinyl-[cysteine desulfurase] + AH2 = [ThiS sulfur-carrier protein]-C-terminal-Gly-aminoethanethioate + L-cysteinyl-[cysteine desulfurase] + A + AMP + 2 H(+). It participates in cofactor biosynthesis; thiamine diphosphate biosynthesis. Its function is as follows. Catalyzes the ATP-dependent transfer of a sulfur to tRNA to produce 4-thiouridine in position 8 of tRNAs, which functions as a near-UV photosensor. Also catalyzes the transfer of sulfur to the sulfur carrier protein ThiS, forming ThiS-thiocarboxylate. This is a step in the synthesis of thiazole, in the thiamine biosynthesis pathway. The sulfur is donated as persulfide by IscS. In Bacillus cereus (strain ATCC 14579 / DSM 31 / CCUG 7414 / JCM 2152 / NBRC 15305 / NCIMB 9373 / NCTC 2599 / NRRL B-3711), this protein is Probable tRNA sulfurtransferase.